Consider the following 493-residue polypeptide: Gamma-aminobutyric acid receptor subunit alpha-3 (493 aa).

A signal peptide spans 1-28; the sequence is MITTQMWHFYVTRVGLLLLISILPGTTG. Residues 27-54 are disordered; it reads TGQGESRRQEPGDFVKQDIGGLSPKHAP. Residues 29-276 lie on the Extracellular side of the membrane; the sequence is QGESRRQEPG…THFHLKRKIG (248 aa). Basic and acidic residues predominate over residues 31 to 42; sequence ESRRQEPGDFVK. A glycan (N-linked (GlcNAc...) asparagine) is linked at Asn63. Arg119 is a 4-aminobutanoate binding site. N-linked (GlcNAc...) asparagine glycosylation is found at Asn163 and Asn176. Thr182 provides a ligand contact to 4-aminobutanoate. An intrachain disulfide couples Cys191 to Cys205. Residue Asn228 is glycosylated (N-linked (GlcNAc...) asparagine). A run of 3 helical transmembrane segments spans residues 277 to 298, 304 to 325, and 338 to 359; these read YFVI…VSFW, VPAR…SISA, and MDWF…FATV. The Cytoplasmic portion of the chain corresponds to 360-458; the sequence is NYFTKRSWAW…TYNSVSKVDK (99 aa). Ser427 is subject to Phosphoserine. Thr428 is subject to Phosphothreonine. A phosphoserine mark is found at Ser434 and Ser443. A helical membrane pass occupies residues 459–480; that stretch reads ISRIIFPVLFAIFNLVYWATYV.

It belongs to the ligand-gated ion channel (TC 1.A.9) family. Gamma-aminobutyric acid receptor (TC 1.A.9.5) subfamily. GABRA3 sub-subfamily. In terms of assembly, heteropentamer, formed by a combination of alpha (GABRA1-6), beta (GABRB1-3), gamma (GABRG1-3), delta (GABRD), epsilon (GABRE), rho (GABRR1-3), pi (GABRP) and theta (GABRQ) chains, each subunit exhibiting distinct physiological and pharmacological properties. Binds UBQLN1. Interacts with GPHN. Expressed in most brain regions. Expressed in lungs, in alveolar epithelium.

It is found in the postsynaptic cell membrane. It localises to the cell membrane. The enzyme catalyses chloride(in) = chloride(out). Alpha subunit of the heteropentameric ligand-gated chloride channel gated by gamma-aminobutyric acid (GABA), a major inhibitory neurotransmitter in the brain. GABA-gated chloride channels, also named GABA(A) receptors (GABAAR), consist of five subunits arranged around a central pore and contain GABA active binding site(s) located at the alpha and beta subunit interface(s). When activated by GABA, GABAARs selectively allow the flow of chloride anions across the cell membrane down their electrochemical gradient. Chloride influx into the postsynaptic neuron following GABAAR opening decreases the neuron ability to generate a new action potential, thereby reducing nerve transmission. In Rattus norvegicus (Rat), this protein is Gamma-aminobutyric acid receptor subunit alpha-3.